The chain runs to 211 residues: Fucoxanthin-chlorophyll a-c binding protein F, chloroplastic (211 aa).

The N-terminal 33 residues, 1-33, are a transit peptide targeting the chloroplast; the sequence is AIACAAAPGLRGPSAFNGAALSTPAKSSSAMKM. 3 helical membrane-spanning segments follow: residues 75–95, 116–136, and 177–197; these read IAML…PGML, IPPG…LAVM, and GRAA…SNQP.

It belongs to the fucoxanthin chlorophyll protein family. In terms of assembly, the LHC complex of chromophytic algae is composed of fucoxanthin, chlorophyll A and C bound non-covalently by fucoxanthin chlorophyll proteins (FCPs). The ratio of pigments in this LHC is; fucoxanthin: chlorophyll C: chlorophyll A; (0.6-1): (0.1-0.3): (1).

Its subcellular location is the plastid. The protein resides in the chloroplast thylakoid membrane. Functionally, the light-harvesting complex (LHC) functions as a light receptor, it captures and delivers excitation energy to photosystems with which it is closely associated. Energy is transferred from the carotenoid and chlorophyll C (or B) to chlorophyll A and the photosynthetic reaction centers where it is used to synthesize ATP and reducing power. This is Fucoxanthin-chlorophyll a-c binding protein F, chloroplastic (FCPF) from Macrocystis pyrifera (Giant kelp).